The following is a 461-amino-acid chain: Elongation factor 1-alpha (461 aa).

The residue at position 2 (Gly2) is a N,N,N-trimethylglycine. The tr-type G domain maps to 5 to 242 (KIHINIVVIG…DAILPPSRPT (238 aa)). Residues 14 to 21 (GHVDSGKS) form a G1 region. Position 14-21 (14-21 (GHVDSGKS)) interacts with GTP. Residues 70-74 (GITID) are G2. The interval 91-94 (DAPG) is G3. GTP is bound by residues 153–156 (NKMD) and 194–196 (SGW). Positions 153 to 156 (NKMD) are G4. Residues 194 to 196 (SGW) are G5. 5-glutamyl glycerylphosphorylethanolamine occurs at positions 301 and 374.

This sequence belongs to the TRAFAC class translation factor GTPase superfamily. Classic translation factor GTPase family. EF-Tu/EF-1A subfamily.

It is found in the cytoplasm. The catalysed reaction is GTP + H2O = GDP + phosphate + H(+). Translation elongation factor that catalyzes the GTP-dependent binding of aminoacyl-tRNA (aa-tRNA) to the A-site of ribosomes during the elongation phase of protein synthesis. Base pairing between the mRNA codon and the aa-tRNA anticodon promotes GTP hydrolysis, releasing the aa-tRNA from EEF1A1 and allowing its accommodation into the ribosome. The growing protein chain is subsequently transferred from the P-site peptidyl tRNA to the A-site aa-tRNA, extending it by one amino acid through ribosome-catalyzed peptide bond formation. The sequence is that of Elongation factor 1-alpha (eef1a) from Oryzias latipes (Japanese rice fish).